Consider the following 130-residue polypeptide: Small ribosomal subunit protein uS11c (130 aa).

It belongs to the universal ribosomal protein uS11 family. As to quaternary structure, part of the 30S ribosomal subunit.

It is found in the plastid. Its subcellular location is the chloroplast. The sequence is that of Small ribosomal subunit protein uS11c from Marsilea quadrifolia (European water clover).